The following is an 839-amino-acid chain: Oxidation resistance protein 1 (839 aa).

Residues 38-91 (DYLREPAPGDPGCGPGELRPPSPTSPEGPDTGQKKTLDKKDGRRMSFQKPKGTI) form a disordered region. The segment covering 69–81 (GQKKTLDKKDGRR) has biased composition (basic and acidic residues). Phosphoserine is present on serine 83. Residues 91 to 134 (IEYTVESRDSLNSIALKFDTTPNELVQLNKLFSRAVVTGQVLYV) form the LysM domain. Threonine 111 is modified (phosphothreonine). Over residues 140–161 (VSSVESSPSLSPVSPLSPTSSE) the composition is skewed to low complexity. The segment at 140–195 (VSSVESSPSLSPVSPLSPTSSEAEFDKTTTPDVVHPKEAPPSSTESSIRPARVVSS) is disordered. Residues 163 to 177 (EFDKTTTPDVVHPKE) show a composition bias toward basic and acidic residues. Phosphoserine occurs at positions 194, 195, and 197. In terms of domain architecture, GRAM spans 206–261 (KFLKINCKYITNGKGTVSGVLLVTPNNIMFDPHKTDPLVQENGCEEYGIMCPMEEV). A phosphoserine mark is found at serine 287, serine 327, and serine 329. Disordered regions lie at residues 292–401 (CHSK…VGAL) and 415–540 (KEGD…SLLK). The residue at position 334 (threonine 334) is a Phosphothreonine. Serine 339 bears the Phosphoserine mark. The span at 340-356 (PIREELPSSELRQEKSS) shows a compositional bias: basic and acidic residues. Composition is skewed to polar residues over residues 357–378 (DASS…TAAS) and 387–397 (TNANSGRSSSE). 2 stretches are compositionally biased toward basic and acidic residues: residues 433-450 (QSTD…HHEN) and 469-497 (LTEK…ELRK). A Phosphoserine modification is found at serine 488. A compositionally biased stretch (polar residues) spans 502–519 (HSMQQAKQQRDTIQQVAQ). Positions 543–570 (RRHRLHKFLCLRVGKPMRKTFVSQASAT) are mediates oxidative antimutator activity. Positions 648–677 (TREDINSKQAAPAKADLEPESFRPNLSDPS) are disordered. A TLDc domain is found at 678-839 (ELLLPDQIEK…IQDIEIWAFE (162 aa)).

Belongs to the OXR1 family.

The protein localises to the mitochondrion. Its function is as follows. May be involved in protection from oxidative damage. This Rattus norvegicus (Rat) protein is Oxidation resistance protein 1 (Oxr1).